The primary structure comprises 195 residues: Putative CheY-P phosphatase CheC1 (195 aa).

This sequence belongs to the CheC family.

In terms of biological role, catalyzes the dephosphorylation of CheY-P. In Halobacterium salinarum (strain ATCC 29341 / DSM 671 / R1), this protein is Putative CheY-P phosphatase CheC1 (cheC1).